The primary structure comprises 1183 residues: PAN2-PAN3 deadenylation complex catalytic subunit PAN2 (1183 aa).

Residues 1–24 (MDGWTEISRIAATTQPPKGPSPHI) form a disordered region. WD repeat units follow at residues 159–207 (DLNK…SIKS), 269–309 (PFPA…NVFL), and 327–366 (SKAPFMTNLEISENGDFFAFSDSYATMHLWTLNNSGSTIT). Residues 369 to 520 (FVNFPASIEQ…FQYKVPLSRK (152 aa)) are linker. One can recognise a USP domain in the interval 521–919 (KIPNCYSRLQ…KPVILVYHDS (399 aa)). The 175-residue stretch at 977–1151 (IAIDAEFVNL…EDAYTALLLY (175 aa)) folds into the Exonuclease domain. The a divalent metal cation site is built by D980, E982, D1090, and D1143.

Belongs to the peptidase C19 family. PAN2 subfamily. Forms a heterotrimer with an asymmetric homodimer of the regulatory subunit PAN3 to form the poly(A)-nuclease (PAN) deadenylation complex. A divalent metal cation serves as cofactor.

Its subcellular location is the cytoplasm. The enzyme catalyses Exonucleolytic cleavage of poly(A) to 5'-AMP.. Its activity is regulated as follows. Positively regulated by the regulatory subunit PAN3. In terms of biological role, catalytic subunit of the poly(A)-nuclease (PAN) deadenylation complex, one of two cytoplasmic mRNA deadenylases involved in mRNA turnover. PAN specifically shortens poly(A) tails of RNA and the activity is stimulated by poly(A)-binding protein PAB1. PAN deadenylation is followed by rapid degradation of the shortened mRNA tails by the CCR4-NOT complex. Deadenylated mRNAs are then degraded by two alternative mechanisms, namely exosome-mediated 3'-5' exonucleolytic degradation, or deadenylation-dependent mRNA decaping and subsequent 5'-3' exonucleolytic degradation by XRN1. May also be involved in post-transcriptional maturation of mRNA poly(A) tails. This is PAN2-PAN3 deadenylation complex catalytic subunit PAN2 from Scheffersomyces stipitis (strain ATCC 58785 / CBS 6054 / NBRC 10063 / NRRL Y-11545) (Yeast).